The chain runs to 135 residues: 6-pyruvoyl tetrahydrobiopterin synthase (135 aa).

H17 provides a ligand contact to Zn(2+). The active-site Proton acceptor is the C36. The Zn(2+) site is built by H40 and H42. Catalysis depends on charge relay system residues H81 and E124.

It belongs to the PTPS family. Homohexamer formed of two homotrimers in a head to head fashion. The cofactor is Zn(2+).

It carries out the reaction 7,8-dihydroneopterin 3'-triphosphate = 6-pyruvoyl-5,6,7,8-tetrahydropterin + triphosphate + H(+). Its pathway is cofactor biosynthesis; tetrahydrobiopterin biosynthesis; tetrahydrobiopterin from 7,8-dihydroneopterin triphosphate: step 1/3. Its function is as follows. Involved in the biosynthesis of tetrahydrobiopterin, an essential cofactor of aromatic amino acid hydroxylases. Catalyzes the transformation of 7,8-dihydroneopterin triphosphate into 6-pyruvoyl tetrahydropterin. In Dictyostelium discoideum (Social amoeba), this protein is 6-pyruvoyl tetrahydrobiopterin synthase (ptsA).